A 399-amino-acid chain; its full sequence is Acetate kinase (399 aa).

N10 is a binding site for Mg(2+). ATP is bound at residue K17. R91 provides a ligand contact to substrate. Catalysis depends on D148, which acts as the Proton donor/acceptor. ATP contacts are provided by residues 208 to 212 (HLGNG), 283 to 285 (DCR), and 331 to 335 (GIGEN). E385 is a Mg(2+) binding site.

This sequence belongs to the acetokinase family. As to quaternary structure, homodimer. Mg(2+) is required as a cofactor. It depends on Mn(2+) as a cofactor.

It localises to the cytoplasm. The enzyme catalyses acetate + ATP = acetyl phosphate + ADP. It functions in the pathway metabolic intermediate biosynthesis; acetyl-CoA biosynthesis; acetyl-CoA from acetate: step 1/2. Its function is as follows. Catalyzes the formation of acetyl phosphate from acetate and ATP. Can also catalyze the reverse reaction. The protein is Acetate kinase of Shewanella amazonensis (strain ATCC BAA-1098 / SB2B).